The chain runs to 230 residues: Uracil-DNA glycosylase (230 aa).

D70 serves as the catalytic Proton acceptor.

This sequence belongs to the uracil-DNA glycosylase (UDG) superfamily. UNG family.

The protein resides in the cytoplasm. It carries out the reaction Hydrolyzes single-stranded DNA or mismatched double-stranded DNA and polynucleotides, releasing free uracil.. Excises uracil residues from the DNA which can arise as a result of misincorporation of dUMP residues by DNA polymerase or due to deamination of cytosine. The protein is Uracil-DNA glycosylase of Pseudomonas putida (strain W619).